Reading from the N-terminus, the 494-residue chain is Rho GTPase-activating protein 19 (494 aa).

Position 2 is an N-acetylalanine (Ala2). A phosphoserine mark is found at Ser7 and Ser31. The 207-residue stretch at 102–308 (MSLKRKEKGV…FMIKHSQKLF (207 aa)) folds into the Rho-GAP domain. Disordered regions lie at residues 349–368 (KSQK…TQHH) and 399–421 (QSLT…ARSR). Residues 354–368 (NRVDSCPHQEETQHH) are compositionally biased toward basic and acidic residues. A compositionally biased stretch (polar residues) spans 399–415 (QSLTQTPGREPSTSQVQ). A phosphoserine mark is found at Ser422, Ser438, and Ser470. Thr478 bears the Phosphothreonine mark.

As to expression, strong expression in fetal heart, brain, placenta, lung, liver, skeletal muscle, kidney and pancreas. Weak expression in adult pancreas, spleen, thymus, and ovary.

It is found in the nucleus. GTPase activator for the Rho-type GTPases by converting them to an inactive GDP-bound state. In Homo sapiens (Human), this protein is Rho GTPase-activating protein 19 (ARHGAP19).